A 291-amino-acid chain; its full sequence is 4-diphosphocytidyl-2-C-methyl-D-erythritol kinase (291 aa).

Lys10 is a catalytic residue. 99–109 (PMGGGLGGGSS) contributes to the ATP binding site. The active site involves Asp141.

Belongs to the GHMP kinase family. IspE subfamily. As to quaternary structure, homodimer.

It catalyses the reaction 4-CDP-2-C-methyl-D-erythritol + ATP = 4-CDP-2-C-methyl-D-erythritol 2-phosphate + ADP + H(+). It participates in isoprenoid biosynthesis; isopentenyl diphosphate biosynthesis via DXP pathway; isopentenyl diphosphate from 1-deoxy-D-xylulose 5-phosphate: step 3/6. In terms of biological role, catalyzes the phosphorylation of the position 2 hydroxy group of 4-diphosphocytidyl-2C-methyl-D-erythritol. This chain is 4-diphosphocytidyl-2-C-methyl-D-erythritol kinase, found in Proteus mirabilis (strain HI4320).